The sequence spans 258 residues: Type III pantothenate kinase (258 aa).

6–13 is an ATP binding site; sequence DVGNTNTV. Substrate-binding positions include tyrosine 100 and 107-110; that span reads GADR. The Proton acceptor role is filled by aspartate 109. Aspartate 129 is a K(+) binding site. Threonine 132 contributes to the ATP binding site. Threonine 184 is a binding site for substrate.

The protein belongs to the type III pantothenate kinase family. Homodimer. It depends on NH4(+) as a cofactor. The cofactor is K(+).

It localises to the cytoplasm. The catalysed reaction is (R)-pantothenate + ATP = (R)-4'-phosphopantothenate + ADP + H(+). It functions in the pathway cofactor biosynthesis; coenzyme A biosynthesis; CoA from (R)-pantothenate: step 1/5. Its activity is regulated as follows. Not regulated by feedback inhibition by CoA and its thioesters as described for many other pantothenate kinases. Not inhibited by N-pentylpantothenamide (N5-Pan), and this compound cannot act as a substrate either. Functionally, catalyzes the phosphorylation of pantothenate (Pan), the first step in CoA biosynthesis. Cannot utilize a phosphoryl donor other than ATP. This is Type III pantothenate kinase (coaX) from Bacillus subtilis (strain 168).